Consider the following 282-residue polypeptide: Hydroxyacylglutathione hydrolase-like protein (282 aa).

Histidine 54, histidine 56, aspartate 58, histidine 59, histidine 110, aspartate 134, and histidine 173 together coordinate Zn(2+).

It belongs to the metallo-beta-lactamase superfamily. Glyoxalase II family. The cofactor is Zn(2+).

In terms of biological role, hydrolase acting on ester bonds. The chain is Hydroxyacylglutathione hydrolase-like protein (HAGHL) from Gallus gallus (Chicken).